Consider the following 163-residue polypeptide: Endoribonuclease YbeY (163 aa).

3 residues coordinate Zn(2+): His-129, His-133, and His-139.

Belongs to the endoribonuclease YbeY family. It depends on Zn(2+) as a cofactor.

It localises to the cytoplasm. Single strand-specific metallo-endoribonuclease involved in late-stage 70S ribosome quality control and in maturation of the 3' terminus of the 16S rRNA. This is Endoribonuclease YbeY from Picosynechococcus sp. (strain ATCC 27264 / PCC 7002 / PR-6) (Agmenellum quadruplicatum).